The chain runs to 318 residues: uncharacterized protein (318 aa).

This is an uncharacterized protein from Orgyia pseudotsugata multicapsid polyhedrosis virus (OpMNPV).